Reading from the N-terminus, the 185-residue chain is Elongation factor P (185 aa).

The protein belongs to the elongation factor P family.

It localises to the cytoplasm. It functions in the pathway protein biosynthesis; polypeptide chain elongation. In terms of biological role, involved in peptide bond synthesis. Stimulates efficient translation and peptide-bond synthesis on native or reconstituted 70S ribosomes in vitro. Probably functions indirectly by altering the affinity of the ribosome for aminoacyl-tRNA, thus increasing their reactivity as acceptors for peptidyl transferase. The protein is Elongation factor P of Burkholderia vietnamiensis (strain G4 / LMG 22486) (Burkholderia cepacia (strain R1808)).